Consider the following 266-residue polypeptide: N-formylglutamate deformylase (266 aa).

It belongs to the N-formylglutamate deformylase family. Monomer.

The enzyme catalyses N-formyl-L-glutamate + H2O = formate + L-glutamate. The protein operates within amino-acid degradation; L-histidine degradation into L-glutamate; L-glutamate from N-formimidoyl-L-glutamate (deiminase route): step 2/2. Functionally, catalyzes the hydrolysis of N-formyl-L-glutamate to formate and L-glutamate. Shows weak activity with N-formyl-L-glutamine. This Pseudomonas aeruginosa (strain ATCC 15692 / DSM 22644 / CIP 104116 / JCM 14847 / LMG 12228 / 1C / PRS 101 / PAO1) protein is N-formylglutamate deformylase.